A 140-amino-acid polypeptide reads, in one-letter code: FAD synthase (140 aa).

ATP contacts are provided by residues 9–10 (TF), 14–17 (HPGH), and aspartate 92.

The protein belongs to the archaeal FAD synthase family. As to quaternary structure, homodimer. The cofactor is a divalent metal cation.

It catalyses the reaction FMN + ATP + H(+) = FAD + diphosphate. It participates in cofactor biosynthesis; FAD biosynthesis; FAD from FMN: step 1/1. Functionally, catalyzes the transfer of the AMP portion of ATP to flavin mononucleotide (FMN) to produce flavin adenine dinucleotide (FAD) coenzyme. The protein is FAD synthase of Natronomonas pharaonis (strain ATCC 35678 / DSM 2160 / CIP 103997 / JCM 8858 / NBRC 14720 / NCIMB 2260 / Gabara) (Halobacterium pharaonis).